The following is a 321-amino-acid chain: Fe-S cluster assembly protein DRE2 (321 aa).

Positions 1 to 140 (MNNTAHSMSE…RRPASSSVAE (140 aa)) are N-terminal SAM-like domain. Over residues 128–138 (IESRRPASSSV) the composition is skewed to polar residues. Residues 128-166 (IESRRPASSSVAEKDSTASSGMGAVKLRRKPNENGGHQQ) are disordered. Residues 140 to 177 (EKDSTASSGMGAVKLRRKPNENGGHQQKKALLWATQPE) form a linker region. The [2Fe-2S] cluster site is built by Cys-202, Cys-217, Cys-220, and Cys-222. A fe-S binding site A region spans residues 202 to 222 (CTVDFSAPRTRRKRACKGCTC). Positions 239–263 (QLDPSEVGGTGGKRTEVTTTVKGPN) are disordered. Residues Cys-283, Cys-286, Cys-294, and Cys-297 each contribute to the [4Fe-4S] cluster site. Short sequence motifs (cx2C motif) lie at residues 283–286 (CGSC) and 294–297 (CSSC). A fe-S binding site B region spans residues 283-297 (CGSCFLGDAFRCSSC).

Belongs to the anamorsin family. Monomer. Interacts with TAH18. Interacts with MIA40. The cofactor is [2Fe-2S] cluster. [4Fe-4S] cluster serves as cofactor.

It is found in the cytoplasm. The protein localises to the mitochondrion intermembrane space. In terms of biological role, component of the cytosolic iron-sulfur (Fe-S) protein assembly (CIA) machinery required for the maturation of extramitochondrial Fe-S proteins. Part of an electron transfer chain functioning in an early step of cytosolic Fe-S biogenesis, facilitating the de novo assembly of a [4Fe-4S] cluster on the scaffold complex CFD1-NBP35. Electrons are transferred to DRE2 from NADPH via the FAD- and FMN-containing protein TAH18. TAH18-DRE2 are also required for the assembly of the diferric tyrosyl radical cofactor of ribonucleotide reductase (RNR), probably by providing electrons for reduction during radical cofactor maturation in the catalytic small subunit RNR2. In Malassezia globosa (strain ATCC MYA-4612 / CBS 7966) (Dandruff-associated fungus), this protein is Fe-S cluster assembly protein DRE2.